The following is a 644-amino-acid chain: ATP-dependent zinc metalloprotease FtsH (644 aa).

Residues 1–13 (MANNDNKHRRSMS) lie on the Cytoplasmic side of the membrane. A helical membrane pass occupies residues 14–34 (MLLYIAVAIFVYLLLSNTLLP). Topologically, residues 35–117 (GLLRQQIQTV…SIPDNSANML (83 aa)) are extracellular. The chain crosses the membrane as a helical span at residues 118 to 138 (MYALIQYGIPLIIFLGIGFFI). Residues 139-644 (NRSLKRAMGD…DEGSSTPSEE (506 aa)) lie on the Cytoplasmic side of the membrane. 224–231 (GPPGTGKT) serves as a coordination point for ATP. Residue histidine 445 coordinates Zn(2+). Residue glutamate 446 is part of the active site. Zn(2+) contacts are provided by histidine 449 and aspartate 522.

The protein in the central section; belongs to the AAA ATPase family. It in the C-terminal section; belongs to the peptidase M41 family. Homohexamer. The cofactor is Zn(2+).

The protein localises to the cell membrane. Functionally, acts as a processive, ATP-dependent zinc metallopeptidase for both cytoplasmic and membrane proteins. Plays a role in the quality control of integral membrane proteins. The protein is ATP-dependent zinc metalloprotease FtsH of Lancefieldella parvula (strain ATCC 33793 / DSM 20469 / CCUG 32760 / JCM 10300 / KCTC 3663 / VPI 0546 / 1246) (Atopobium parvulum).